The sequence spans 257 residues: Phosphate import ATP-binding protein PstB (257 aa).

Positions 5 to 246 (LEIKDLTAFY…EVIFTSPKNE (242 aa)) constitute an ABC transporter domain. An ATP-binding site is contributed by 37–44 (GPSGCGKS).

This sequence belongs to the ABC transporter superfamily. Phosphate importer (TC 3.A.1.7) family. As to quaternary structure, the complex is composed of two ATP-binding proteins (PstB), two transmembrane proteins (PstC and PstA) and a solute-binding protein (PstS).

It is found in the cell membrane. It catalyses the reaction phosphate(out) + ATP + H2O = ADP + 2 phosphate(in) + H(+). Its function is as follows. Part of the ABC transporter complex PstSACB involved in phosphate import. Responsible for energy coupling to the transport system. This chain is Phosphate import ATP-binding protein PstB, found in Tropheryma whipplei (strain Twist) (Whipple's bacillus).